The primary structure comprises 135 residues: Transcription antitermination protein NusB (135 aa).

It belongs to the NusB family.

Functionally, involved in transcription antitermination. Required for transcription of ribosomal RNA (rRNA) genes. Binds specifically to the boxA antiterminator sequence of the ribosomal RNA (rrn) operons. This chain is Transcription antitermination protein NusB, found in Clostridium perfringens (strain SM101 / Type A).